A 350-amino-acid chain; its full sequence is Protein Wnt-2 (350 aa).

An N-terminal signal peptide occupies residues 1–25 (MNFLPNGICFYLSVAICWFSSRVDA). 11 disulfide bridges follow: Cys-74/Cys-85, Cys-125/Cys-133, Cys-135/Cys-155, Cys-204/Cys-218, Cys-206/Cys-213, Cys-276/Cys-307, Cys-292/Cys-302, Cys-306/Cys-346, Cys-322/Cys-337, Cys-324/Cys-334, and Cys-329/Cys-330. Asn-132 carries N-linked (GlcNAc...) asparagine glycosylation. Ser-210 carries O-palmitoleoyl serine; by PORCN lipidation. Asn-293 is a glycosylation site (N-linked (GlcNAc...) asparagine).

The protein belongs to the Wnt family. Palmitoleoylation is required for efficient binding to frizzled receptors. Depalmitoleoylation leads to Wnt signaling pathway inhibition.

It localises to the secreted. The protein localises to the extracellular space. The protein resides in the extracellular matrix. Its function is as follows. Ligand for members of the frizzled family of seven transmembrane receptors. Functions in the canonical Wnt signaling pathway that results in activation of transcription factors of the TCF/LEF family. The protein is Protein Wnt-2 (wnt2) of Danio rerio (Zebrafish).